The sequence spans 317 residues: Tumor-associated calcium signal transducer 2 (317 aa).

Residues 1-24 (MARGLDLAPLLLLLLAMATRFCTA) form the signal peptide. Residues 25–270 (QSNCTCPTNK…QFSMKRLTAG (246 aa)) are Extracellular-facing. A glycan (N-linked (GlcNAc...) asparagine) is linked at N27. The 76-residue stretch at 64-139 (TSKCLLLKAR…TDKGDQSLRC (76 aa)) folds into the Thyroglobulin type-1 domain. 3 disulfide bridges follow: C67–C102, C113–C119, and C121–C139. The N-linked (GlcNAc...) asparagine glycan is linked to N114. Residues N162 and N202 are each glycosylated (N-linked (GlcNAc...) asparagine). Residues 271 to 291 (VIAVIAVVSVAVVAGVVVLVV) form a helical membrane-spanning segment. Residues 292–317 (TKRRKSGKYKKVELKELGEMRSEPSL) lie on the Cytoplasmic side of the membrane.

Belongs to the EPCAM family. Expressed in kidney, lung, ovary and testis. High levels of expression in immortalized keratinocytes.

Its subcellular location is the membrane. In terms of biological role, may function as a growth factor receptor. The sequence is that of Tumor-associated calcium signal transducer 2 (Tacstd2) from Mus musculus (Mouse).